Reading from the N-terminus, the 534-residue chain is MSSDEEDFNDIYGDDKPTTTEEVKKEEEQNKAGSGTSQLDQLAALQALSSSLNKLNNPNSNNSSSNNSNQDTSSSKQDGTANDKEGSNEDTKNEKKQESATSANANANASSAGPSGLPWEQLQQTMSQFQQPSSQSPPQQQVTQTKEERSKADLSKESCKMFIGGLNWDTTEDNLREYFGKYGTVTDLKIMKDPATGRSRGFGFLSFEKPSSVDEVVKTQHILDGKVIDPKRAIPRDEQDKTGKIFVGGIGPDVRPKEFEEFFSQWGTIIDAQLMLDKDTGQSRGFGFVTYDSADAVDRVCQNKFIDFKDRKIEIKRAEPRHMQQKSSNNGGNNGGNNMNRRGGNFGNQGDFNQMYQNPMMGGYNPMMNPQAMTDYYQKMQEYYQQMQKQTGMDYTQMYQQQMQQMAMMMPGFAMPPNAMTLNQPQQDSNATQGSPAPSDSDNNKSNDVQTIGNTSNTDSGSPPLNLPNGPKGPSQYNDDHNSGYGYNRDRGDRDRNDRDRDYNHRSGGNHRRNGRGGRGGYNRRNNGYHPYNR.

The disordered stretch occupies residues 1-154 (MSSDEEDFND…TKEERSKADL (154 aa)). Phosphoserine is present on residues Ser-2 and Ser-3. Positions 13-30 (GDDKPTTTEEVKKEEEQN) are enriched in basic and acidic residues. Residues 37-78 (SQLDQLAALQALSSSLNKLNNPNSNNSSSNNSNQDTSSSKQD) are compositionally biased toward low complexity. A phosphoserine mark is found at Ser-51 and Ser-87. Basic and acidic residues predominate over residues 81-98 (ANDKEGSNEDTKNEKKQE). Composition is skewed to low complexity over residues 99 to 112 (SATSANANANASSA) and 121 to 144 (QLQQTMSQFQQPSSQSPPQQQVTQ). A compositionally biased stretch (basic and acidic residues) spans 145–154 (TKEERSKADL). 2 RRM domains span residues 159 to 241 (CKMF…EQDK) and 243 to 320 (GKIF…RAEP). Ser-206 carries the post-translational modification Phosphoserine. Disordered regions lie at residues 316–354 (KRAEPRHMQQKSSNNGGNNGGNNMNRRGGNFGNQGDFNQ) and 415–534 (MPPN…PYNR). A compositionally biased stretch (low complexity) spans 336–354 (GNNMNRRGGNFGNQGDFNQ). Over residues 420-459 (MTLNQPQQDSNATQGSPAPSDSDNNKSNDVQTIGNTSNTD) the composition is skewed to polar residues. Thr-458 bears the Phosphothreonine mark. Residues Ser-460 and Ser-462 each carry the phosphoserine modification. A compositionally biased stretch (low complexity) spans 460–475 (SGSPPLNLPNGPKGPS). The span at 478–505 (NDDHNSGYGYNRDRGDRDRNDRDRDYNH) shows a compositional bias: basic and acidic residues. Arg-519 carries the omega-N-methylarginine modification. Residues 523–534 (NRRNNGYHPYNR) show a composition bias toward low complexity.

In terms of assembly, interacts with NAM7. Methylated by HMT1. The methylation is required for nuclear export.

It is found in the cytoplasm. The protein resides in the nucleus. Its subcellular location is the stress granule. Functionally, RNA-binding protein, which is involved in the polyadenylation-dependent pre-mRNA 3'-end formation and cooperates with the cleavage factor CFIA complex and the cleavage and polyadenylation factor (CPF) complex. May be involved in regulation of poly(A) site selection. Is involved in nonsense-mediated mRNA decay. Seems to bind to an RNA downstream sequence element (DSE) located 3' of a nonsense codon and may mark the transcript for decay. In Saccharomyces cerevisiae (strain ATCC 204508 / S288c) (Baker's yeast), this protein is Nuclear polyadenylated RNA-binding protein 4.